Here is a 304-residue protein sequence, read N- to C-terminus: Thyroxine 5-deiodinase (304 aa).

The segment at 1–22 is disordered; that stretch reads MPRQAASRLVVGEGEGPPGASG. Residues 1–44 are Cytoplasmic-facing; that stretch reads MPRQAASRLVVGEGEGPPGASGPAATMLRSLLLHSLRLCAQTAS. The chain crosses the membrane as a helical; Signal-anchor for type II membrane protein span at residues 45-67; it reads CLVLFPRFLGTAFMLWLLDFLCI. The Extracellular portion of the chain corresponds to 68 to 304; it reads RKHFLRRRHP…QLHGTRPHRF (237 aa). Sec170 is a catalytic residue. Sec170 is a non-standard amino acid (selenocysteine).

This sequence belongs to the iodothyronine deiodinase family. In terms of assembly, monomer. Homodimer. May undergo minor heretodimerization with DIO1 and DIO2.

It is found in the cell membrane. Its subcellular location is the endosome membrane. The catalysed reaction is 3,3',5'-triiodo-L-thyronine + iodide + A + H(+) = L-thyroxine + AH2. It carries out the reaction 3,3'-diiodo-L-thyronine + iodide + A + H(+) = 3,3',5-triiodo-L-thyronine + AH2. The enzyme catalyses 3-iodo-L-thyronine + iodide + A + H(+) = 3,5-diiodo-L-thyronine + AH2. It catalyses the reaction L-thyronine + iodide + A + H(+) = 3-iodo-L-thyronine + AH2. The catalysed reaction is 3',5'-diiodo-L-thyronine + iodide + A + H(+) = 3,3',5'-triiodo-L-thyronine + AH2. It carries out the reaction 3'-iodo-L-thyronine + iodide + A + H(+) = 3,3'-diiodo-L-thyronine + AH2. The enzyme catalyses 3,3',5'-triiodothyronamine + iodide + A + H(+) = 3,3',5,5'-tetraiodothyronamine + AH2. It catalyses the reaction 3',5'-diiodothyronamine + iodide + A + H(+) = 3,3',5'-triiodothyronamine + AH2. The catalysed reaction is 3,3'-diiodothyronamine + iodide + A + H(+) = 3,3',5-triiodothyronamine + AH2. It carries out the reaction 3-iodothyronamine + iodide + A + H(+) = 3,5-diiodothyronamine + AH2. The enzyme catalyses 3'-iodothyronamine + iodide + A + H(+) = 3,3'-diiodothyronamine + AH2. It catalyses the reaction thyronamine + iodide + A + H(+) = 3-iodothyronamine + AH2. In terms of biological role, plays a crucial role in the metabolism of thyroid hormones (TH) and has specific roles in TH activation and inactivation by deiodination. Catalyzes the deiodination of L-thyroxine (T4) to 3,3',5'-triiodothyronine (rT3), 3,5,3'-triiodothyronine (T3) to 3,3'-diiodothyronine (3,3'-T2), 3,5-diiodothyronine (3,5-T2) to 3-monoiodothyronine (3-T1), rT3 to 3',5'-diiodothyronine (3',5'-T2) and 3,3'-T2 to 3'-monoiodothyronine (3'-T1) via inner-ring deiodination (IRD). Catalyzes the deiodination of 3-T1 to L-thyronine (T0) via outer-ring deiodination (ORD). Catalyzes the tyrosyl ring deiodinations of 3,3',5,5'-tetraiodothyronamine, 3,3',5'-triiodothyronamine, 3,5,3'-triiodothyronamine, 3,5-diiodothyronamine, 3,3'-diiodothyronamine and 3-iodothyronamine. This Mus musculus (Mouse) protein is Thyroxine 5-deiodinase (Dio3).